The primary structure comprises 78 residues: TP53-regulated inhibitor of apoptosis 1 (78 aa).

Residues methionine 1 to isoleucine 52 adopt a coiled-coil conformation. Residues glycine 5–lysine 55 form the CHCH domain. Short sequence motifs (cx9C motif) lie at residues cysteine 8–cysteine 18 and cysteine 37–cysteine 47. 2 cysteine pairs are disulfide-bonded: cysteine 8/cysteine 47 and cysteine 18/cysteine 37.

This sequence belongs to the TRIAP1/MDM35 family. Monomer. Forms a complex with prelid1 in the mitochondrion intermembrane space. Interacts with prelid3a. As to expression, expressed in the developing pronephros.

The protein localises to the mitochondrion. Its subcellular location is the mitochondrion intermembrane space. It carries out the reaction a 1,2-diacyl-sn-glycero-3-phosphate(in) = a 1,2-diacyl-sn-glycero-3-phosphate(out). Involved in the modulation of the mitochondrial apoptotic pathway by ensuring the accumulation of cardiolipin (CL) in mitochondrial membranes. The triap1:prelid1 complex probably functions as a phosphatidic acid (PA) transporter across the mitochondrion intermembrane space to provide PA for cardiolipin CL synthesis in the inner membrane. Likewise, the triap1:prelid3a complex mediates the transfer of phosphatidic acid (PA) between liposomes (in vitro) and probably functions as a PA transporter across the mitochondrion intermembrane space (in vivo). Mediates cell survival by inhibiting activation of caspase-9 which prevents induction of apoptosis. Required for pronephros development; probably involved at an early stage in the formation of pronephric components derived from the somatic layer. This is TP53-regulated inhibitor of apoptosis 1 from Xenopus tropicalis (Western clawed frog).